The chain runs to 466 residues: NADPH:adrenodoxin oxidoreductase, mitochondrial (466 aa).

4 residues coordinate FAD: alanine 40, glutamate 61, leucine 69, and leucine 105. NADP(+) is bound by residues 176–179, 220–221, and glutamate 232; these read QGNV and RR. FAD is bound by residues tryptophan 379 and 386-388; that span reads GVI. NADP(+) is bound at residue glycine 386.

It belongs to the ferredoxin--NADP reductase type 1 family. The cofactor is FAD. As to expression, expressed predominantly in prothoracic gland of the larval ring gland and nurse cells of the adult ovary. Low expression is all adult tissues examined.

It is found in the mitochondrion inner membrane. It catalyses the reaction 2 reduced [adrenodoxin] + NADP(+) + H(+) = 2 oxidized [adrenodoxin] + NADPH. The protein operates within steroid metabolism; cholesterol metabolism. Its function is as follows. Required for synthesis of steroid hormones, for olfactory sensory behavior and completion of the second larval molt (a steroid mediated developmental transition) and pupariation. This is NADPH:adrenodoxin oxidoreductase, mitochondrial (dare) from Drosophila melanogaster (Fruit fly).